Consider the following 167-residue polypeptide: Xanthine-guanine phosphoribosyltransferase (167 aa).

Residues 47 to 48 (RG), Gln-79, and 102 to 110 (DDLVDSGKT) each bind 5-phospho-alpha-D-ribose 1-diphosphate. Residue Gln-79 coordinates GMP. Asp-103 lines the Mg(2+) pocket. Residues Asp-106 and Ile-149 each contribute to the guanine site. 2 residues coordinate xanthine: Asp-106 and Ile-149. GMP is bound by residues 106–110 (DSGKT) and 148–149 (WI).

The protein belongs to the purine/pyrimidine phosphoribosyltransferase family. XGPT subfamily. As to quaternary structure, homotetramer. Requires Mg(2+) as cofactor.

The protein resides in the cell inner membrane. It catalyses the reaction GMP + diphosphate = guanine + 5-phospho-alpha-D-ribose 1-diphosphate. The enzyme catalyses XMP + diphosphate = xanthine + 5-phospho-alpha-D-ribose 1-diphosphate. It carries out the reaction IMP + diphosphate = hypoxanthine + 5-phospho-alpha-D-ribose 1-diphosphate. It functions in the pathway purine metabolism; GMP biosynthesis via salvage pathway; GMP from guanine: step 1/1. Its pathway is purine metabolism; XMP biosynthesis via salvage pathway; XMP from xanthine: step 1/1. In terms of biological role, purine salvage pathway enzyme that catalyzes the transfer of the ribosyl-5-phosphate group from 5-phospho-alpha-D-ribose 1-diphosphate (PRPP) to the N9 position of the 6-oxopurines guanine and xanthine to form the corresponding ribonucleotides GMP (guanosine 5'-monophosphate) and XMP (xanthosine 5'-monophosphate), with the release of PPi. To a lesser extent, also acts on hypoxanthine. The polypeptide is Xanthine-guanine phosphoribosyltransferase (Cereibacter sphaeroides (strain ATCC 17025 / ATH 2.4.3) (Rhodobacter sphaeroides)).